Here is a 56-residue protein sequence, read N- to C-terminus: Large ribosomal subunit protein bL33A (56 aa).

The protein belongs to the bacterial ribosomal protein bL33 family.

The chain is Large ribosomal subunit protein bL33A from Cutibacterium acnes (strain DSM 16379 / KPA171202) (Propionibacterium acnes).